The sequence spans 393 residues: Methylthioribose-1-phosphate isomerase (393 aa).

Catalysis depends on Asp-265, which acts as the Proton donor.

It belongs to the eIF-2B alpha/beta/delta subunits family. MtnA subfamily.

Its subcellular location is the cytoplasm. The protein localises to the nucleus. It carries out the reaction 5-(methylsulfanyl)-alpha-D-ribose 1-phosphate = 5-(methylsulfanyl)-D-ribulose 1-phosphate. It functions in the pathway amino-acid biosynthesis; L-methionine biosynthesis via salvage pathway; L-methionine from S-methyl-5-thio-alpha-D-ribose 1-phosphate: step 1/6. In terms of biological role, catalyzes the interconversion of methylthioribose-1-phosphate (MTR-1-P) into methylthioribulose-1-phosphate (MTRu-1-P). This chain is Methylthioribose-1-phosphate isomerase, found in Cryptococcus neoformans var. neoformans serotype D (strain B-3501A) (Filobasidiella neoformans).